Consider the following 555-residue polypeptide: Connector enhancer of kinase suppressor of ras 3 (555 aa).

Positions 7-72 constitute an SAM domain; that stretch reads WSPKQVVDWT…LEAVDLLCAL (66 aa). The CRIC domain occupies 80–174; it reads TMKNLVLKLR…TAVQKDCLIA (95 aa). The region spanning 211 to 293 is the PDZ domain; that stretch reads EVHLPNVRPG…GVVLLLKKRP (83 aa). 3 disordered regions span residues 308 to 333, 362 to 389, and 518 to 538; these read RWKP…MDAS, SFGY…SFLD, and PFQE…ASSG. Over residues 311 to 329 the composition is skewed to low complexity; sequence PPLVQTSPPPTTTQSPEST. The 222-residue stretch at 325–546 folds into the DUF1170 domain; sequence SPESTMDASL…SGEPSLLVSW (222 aa). Phosphoserine is present on residues serine 381 and serine 383.

This sequence belongs to the CNKSR family. As to quaternary structure, interacts with epithelial sodium channel ENaC. Interacts directly with SCNN1A (ENaC subunit alpha) and SCNN1B (ENaC subunit beta) C-terminal tails. Interacts with ENaC regulatory proteins NEDD4L, RAF1 and SGK1. As to expression, expressed in kidney.

The protein resides in the cytoplasm. It localises to the apical cell membrane. Functionally, involved in transepithelial sodium transport. Regulates aldosterone-induced and epithelial sodium channel (ENaC)-mediated sodium transport through regulation of ENaC cell surface expression. Acts as a scaffold protein coordinating the assembly of an ENaC-regulatory complex (ERC). The protein is Connector enhancer of kinase suppressor of ras 3 (Cnksr3) of Mus musculus (Mouse).